Consider the following 368-residue polypeptide: MNTFGRELRITTFGESHGRAIGVVIDGVPAGLPLTEEDIRKELDRRMFCHIHWLNPRCEPEEFEILSGVKDGHTQGTPIAIVIWNKKAISSYYDELWMKPRPGHADLAYYLKYGKFYDHRGGGRASGRTTAAIVAAGAVAKKLLALVGAEVAGHIVELGGVEVKRPYTFEDVKKSWEKPLPVVDDDALAAMLEVLRKNAAEGDSVGGGVEIWAVGVPQGLGEPHFGKIRADLAHAAFSVPAVVALDWGAGRQLAKMRGSEANDPIVVKGGKPGLETNKIGGVLGGITIGEPLYFRVWLKPTPSVRKPQRTVDLAKMEPATLQFKGRYDVSVVPKALVALEAMTAITLADHLLRAGVIRRDRPLKDPVV.

Arginine 46 contacts NADP(+). FMN is bound by residues 124–126 (RAS), glycine 284, 299–303 (KPTPS), and arginine 326.

It belongs to the chorismate synthase family. The cofactor is FMNH2.

It catalyses the reaction 5-O-(1-carboxyvinyl)-3-phosphoshikimate = chorismate + phosphate. It functions in the pathway metabolic intermediate biosynthesis; chorismate biosynthesis; chorismate from D-erythrose 4-phosphate and phosphoenolpyruvate: step 7/7. In terms of biological role, catalyzes the anti-1,4-elimination of the C-3 phosphate and the C-6 proR hydrogen from 5-enolpyruvylshikimate-3-phosphate (EPSP) to yield chorismate, which is the branch point compound that serves as the starting substrate for the three terminal pathways of aromatic amino acid biosynthesis. This reaction introduces a second double bond into the aromatic ring system. This Pyrobaculum arsenaticum (strain DSM 13514 / JCM 11321 / PZ6) protein is Chorismate synthase.